A 586-amino-acid polypeptide reads, in one-letter code: Probable zinc metalloprotease EGY3, chloroplastic (586 aa).

The N-terminal 54 residues, 1–54 (MSSSSLVTSLLFSSSSSSNTATSTSSRRSFSLFSKNQYCKPSPLRRSSSLLLVR), are a transit peptide targeting the chloroplast. Residues 62 to 73 (EEKAAPAAESHH) are compositionally biased toward basic and acidic residues. The interval 62–118 (EEKAAPAAESHHAGGGQDDAATASHHAVEGENGVADADGGGVKKSKEELEEEEQQEV) is disordered. Residues 103-195 (VKKSKEELEE…NTFKALDLNK (93 aa)) are a coiled coil. 7 helical membrane passes run 287–307 (LSAVALAVTTFGTIAIMSGFF), 318–338 (VSDVLPLFAGFLSILGVSEIA), 389–409 (ASAYLTSVALAVSAFVSDGSL), 427–447 (PLLSFVQAVIGPYADELGNVL), 454–474 (VGVPVDPLAFAGLLGIVVTSL), 506–526 (VALGAGAIIGGSVLCLAWGLF), and 550–570 (YAWGLVLAVVCLLTLFPNGGG).

This sequence belongs to the peptidase M50B family.

The protein localises to the plastid. It is found in the chloroplast membrane. Its function is as follows. Probable membrane-associated metalloprotease that may be involved in chloroplast development. This Oryza sativa subsp. indica (Rice) protein is Probable zinc metalloprotease EGY3, chloroplastic (EGY3).